A 463-amino-acid chain; its full sequence is Glycine--tRNA ligase (463 aa).

2 residues coordinate substrate: R98 and E174. ATP-binding positions include R206 to E208, F216 to F221, E290 to L291, and G334 to R337. Residue F221–E225 participates in substrate binding. Substrate is bound at residue E330–G334.

This sequence belongs to the class-II aminoacyl-tRNA synthetase family. Homodimer.

The protein resides in the cytoplasm. The catalysed reaction is tRNA(Gly) + glycine + ATP = glycyl-tRNA(Gly) + AMP + diphosphate. Its function is as follows. Catalyzes the attachment of glycine to tRNA(Gly). This chain is Glycine--tRNA ligase, found in Staphylococcus saprophyticus subsp. saprophyticus (strain ATCC 15305 / DSM 20229 / NCIMB 8711 / NCTC 7292 / S-41).